A 118-amino-acid polypeptide reads, in one-letter code: Large ribosomal subunit protein bL19 (118 aa).

It belongs to the bacterial ribosomal protein bL19 family.

This protein is located at the 30S-50S ribosomal subunit interface and may play a role in the structure and function of the aminoacyl-tRNA binding site. In Buchnera aphidicola subsp. Baizongia pistaciae (strain Bp), this protein is Large ribosomal subunit protein bL19.